Reading from the N-terminus, the 67-residue chain is Large ribosomal subunit protein bL35 (67 aa).

Belongs to the bacterial ribosomal protein bL35 family.

This is Large ribosomal subunit protein bL35 from Leptothrix cholodnii (strain ATCC 51168 / LMG 8142 / SP-6) (Leptothrix discophora (strain SP-6)).